Reading from the N-terminus, the 297-residue chain is Probable lipid kinase YegS-like (297 aa).

Positions 2-131 (STFPASLLIL…IDIARVNDKT (130 aa)) constitute a DAGKc domain. Residues T40, 66-72 (GDGTINE), and T93 each bind ATP. L213, D216, and L218 together coordinate Mg(2+). The Proton acceptor role is filled by E269.

Belongs to the diacylglycerol/lipid kinase family. YegS lipid kinase subfamily. The cofactor is Mg(2+). Requires Ca(2+) as cofactor.

It is found in the cytoplasm. Its function is as follows. Probably phosphorylates lipids; the in vivo substrate is unknown. This is Probable lipid kinase YegS-like from Klebsiella pneumoniae (strain 342).